Consider the following 274-residue polypeptide: MPELPEVETSRRGIEPHLVGNILHYAIVRNSKLRWPVSEKIKTLLDEPILSVKRRAKYLLIELNQGWIIVHLGMSGSVRILPEEQPEEKHDHIDLVFRDGKVLRYTDPRRFGAWLWCEDLATSSVLAHLGPEPLSAQFNAQYLYQQSKNKKIAIKPWLMDNKLVVGVGNIYANEALFSSGIMPDRKASSLTEQECDVLVNAIKTVLTRSIEQGGTTLKDFLQSDGKPGYFAQELFVYGRKDKACLICGHTIESIKQGQRSTFFCRHCQHGEITD.

Pro2 (schiff-base intermediate with DNA) is an active-site residue. The active-site Proton donor is Glu3. The Proton donor; for beta-elimination activity role is filled by Lys57. Residues His90, Arg109, and Lys150 each coordinate DNA. Residues 235–269 (FVYGRKDKACLICGHTIESIKQGQRSTFFCRHCQH) form an FPG-type zinc finger. The active-site Proton donor; for delta-elimination activity is the Arg259.

It belongs to the FPG family. As to quaternary structure, monomer. It depends on Zn(2+) as a cofactor.

The catalysed reaction is Hydrolysis of DNA containing ring-opened 7-methylguanine residues, releasing 2,6-diamino-4-hydroxy-5-(N-methyl)formamidopyrimidine.. It catalyses the reaction 2'-deoxyribonucleotide-(2'-deoxyribose 5'-phosphate)-2'-deoxyribonucleotide-DNA = a 3'-end 2'-deoxyribonucleotide-(2,3-dehydro-2,3-deoxyribose 5'-phosphate)-DNA + a 5'-end 5'-phospho-2'-deoxyribonucleoside-DNA + H(+). Involved in base excision repair of DNA damaged by oxidation or by mutagenic agents. Acts as a DNA glycosylase that recognizes and removes damaged bases. Has a preference for oxidized purines, such as 7,8-dihydro-8-oxoguanine (8-oxoG). Has AP (apurinic/apyrimidinic) lyase activity and introduces nicks in the DNA strand. Cleaves the DNA backbone by beta-delta elimination to generate a single-strand break at the site of the removed base with both 3'- and 5'-phosphates. The chain is Formamidopyrimidine-DNA glycosylase from Proteus mirabilis (strain HI4320).